A 185-amino-acid chain; its full sequence is GTP cyclohydrolase 1 (185 aa).

Zn(2+)-binding residues include Cys75, His78, and Cys146.

Belongs to the GTP cyclohydrolase I family. As to quaternary structure, homomer.

It catalyses the reaction GTP + H2O = 7,8-dihydroneopterin 3'-triphosphate + formate + H(+). The protein operates within cofactor biosynthesis; 7,8-dihydroneopterin triphosphate biosynthesis; 7,8-dihydroneopterin triphosphate from GTP: step 1/1. The polypeptide is GTP cyclohydrolase 1 (Clostridium kluyveri (strain NBRC 12016)).